Reading from the N-terminus, the 427-residue chain is Serine hydroxymethyltransferase (427 aa).

(6S)-5,6,7,8-tetrahydrofolate-binding positions include leucine 122 and 126-128; that span reads GHL. Lysine 231 carries the post-translational modification N6-(pyridoxal phosphate)lysine. 355-357 is a (6S)-5,6,7,8-tetrahydrofolate binding site; sequence SPF.

It belongs to the SHMT family. As to quaternary structure, homodimer. It depends on pyridoxal 5'-phosphate as a cofactor.

Its subcellular location is the cytoplasm. It catalyses the reaction (6R)-5,10-methylene-5,6,7,8-tetrahydrofolate + glycine + H2O = (6S)-5,6,7,8-tetrahydrofolate + L-serine. The protein operates within one-carbon metabolism; tetrahydrofolate interconversion. Its pathway is amino-acid biosynthesis; glycine biosynthesis; glycine from L-serine: step 1/1. Catalyzes the reversible interconversion of serine and glycine with tetrahydrofolate (THF) serving as the one-carbon carrier. This reaction serves as the major source of one-carbon groups required for the biosynthesis of purines, thymidylate, methionine, and other important biomolecules. Also exhibits THF-independent aldolase activity toward beta-hydroxyamino acids, producing glycine and aldehydes, via a retro-aldol mechanism. The protein is Serine hydroxymethyltransferase of Synechococcus sp. (strain ATCC 27144 / PCC 6301 / SAUG 1402/1) (Anacystis nidulans).